A 180-amino-acid chain; its full sequence is Threonylcarbamoyl-AMP synthase (180 aa).

The YrdC-like domain maps to Met-1–Pro-180.

This sequence belongs to the SUA5 family. TsaC subfamily.

It localises to the cytoplasm. It carries out the reaction L-threonine + hydrogencarbonate + ATP = L-threonylcarbamoyladenylate + diphosphate + H2O. Functionally, required for the formation of a threonylcarbamoyl group on adenosine at position 37 (t(6)A37) in tRNAs that read codons beginning with adenine. Catalyzes the conversion of L-threonine, HCO(3)(-)/CO(2) and ATP to give threonylcarbamoyl-AMP (TC-AMP) as the acyladenylate intermediate, with the release of diphosphate. This chain is Threonylcarbamoyl-AMP synthase, found in Methylobacillus flagellatus (strain ATCC 51484 / DSM 6875 / VKM B-1610 / KT).